A 65-amino-acid chain; its full sequence is Potassium channel toxin kappa-KTx 2.7 (65 aa).

An N-terminal signal peptide occupies residues Met-1–Cys-26. Residues Ser-27–Glu-39 constitute a propeptide that is removed on maturation. Disulfide bonds link Cys-45-Cys-63 and Cys-49-Cys-59.

It belongs to the short scorpion toxin superfamily. Potassium channel inhibitor kappa-KTx family. Kappa-KTx 2 subfamily. As to expression, expressed by the venom gland.

The protein localises to the secreted. Functionally, weakly inhibits the Kv7.1/KCNQ1 channel (10 uM of the toxin inhibits currents by 17.8%). This is Potassium channel toxin kappa-KTx 2.7 from Heterometrus petersii (Asian forest scorpion).